The sequence spans 300 residues: Ornithine carbamoyltransferase (300 aa).

Residues 49–52 (STRT), Gln-76, Arg-100, and 127–130 (HPCQ) contribute to the carbamoyl phosphate site. L-ornithine is bound by residues Asn-158, Asp-218, and 222–223 (SM). Carbamoyl phosphate contacts are provided by residues 258–259 (CL) and Arg-286.

It belongs to the aspartate/ornithine carbamoyltransferase superfamily. OTCase family.

Its subcellular location is the cytoplasm. The enzyme catalyses carbamoyl phosphate + L-ornithine = L-citrulline + phosphate + H(+). It functions in the pathway amino-acid biosynthesis; L-arginine biosynthesis; L-arginine from L-ornithine and carbamoyl phosphate: step 1/3. In terms of biological role, reversibly catalyzes the transfer of the carbamoyl group from carbamoyl phosphate (CP) to the N(epsilon) atom of ornithine (ORN) to produce L-citrulline. This is Ornithine carbamoyltransferase from Oleidesulfovibrio alaskensis (strain ATCC BAA-1058 / DSM 17464 / G20) (Desulfovibrio alaskensis).